We begin with the raw amino-acid sequence, 68 residues long: Alpha/kappa-conotoxin-like pl14.2 (68 aa).

An N-terminal signal peptide occupies residues 1-27 (MPSVRSVTCCCLLWMMFSVQLVTPGSP). Residues 28 to 39 (ATAQLSGQRTAR) constitute a propeptide that is removed on maturation. 2 cysteine pairs are disulfide-bonded: C46-C61 and C50-C63. Position 64 is an arginine amide (R64). The propeptide occupies 65 to 68 (GKRD).

It belongs to the conotoxin J superfamily. In terms of tissue distribution, expressed by the venom duct.

It localises to the secreted. Functionally, highly inhibits both nicotinic acetylcholine receptors (neuronal (alpha-3/beta-4) and muscular (alpha-1/beta-1/epsilon/delta) subtypes) and the voltage-gated potassium channel Kv1.6/KCNA6 subtype. The sequence is that of Alpha/kappa-conotoxin-like pl14.2 from Conus planorbis (Planorbis cone).